A 355-amino-acid polypeptide reads, in one-letter code: UDP-N-acetylglucosamine--N-acetylmuramyl-(pentapeptide) pyrophosphoryl-undecaprenol N-acetylglucosamine transferase (355 aa).

Residues 15-17, Asn127, Arg163, Ser191, Ile244, 263-268, and Gln288 contribute to the UDP-N-acetyl-alpha-D-glucosamine site; these read TGG and ALTVSE.

Belongs to the glycosyltransferase 28 family. MurG subfamily.

It localises to the cell inner membrane. The catalysed reaction is di-trans,octa-cis-undecaprenyl diphospho-N-acetyl-alpha-D-muramoyl-L-alanyl-D-glutamyl-meso-2,6-diaminopimeloyl-D-alanyl-D-alanine + UDP-N-acetyl-alpha-D-glucosamine = di-trans,octa-cis-undecaprenyl diphospho-[N-acetyl-alpha-D-glucosaminyl-(1-&gt;4)]-N-acetyl-alpha-D-muramoyl-L-alanyl-D-glutamyl-meso-2,6-diaminopimeloyl-D-alanyl-D-alanine + UDP + H(+). It participates in cell wall biogenesis; peptidoglycan biosynthesis. Cell wall formation. Catalyzes the transfer of a GlcNAc subunit on undecaprenyl-pyrophosphoryl-MurNAc-pentapeptide (lipid intermediate I) to form undecaprenyl-pyrophosphoryl-MurNAc-(pentapeptide)GlcNAc (lipid intermediate II). This chain is UDP-N-acetylglucosamine--N-acetylmuramyl-(pentapeptide) pyrophosphoryl-undecaprenol N-acetylglucosamine transferase, found in Escherichia coli O139:H28 (strain E24377A / ETEC).